The chain runs to 186 residues: Phosphopantetheine adenylyltransferase (186 aa).

Thr14 serves as a coordination point for substrate. Residues Thr14–Phe15 and His22 contribute to the ATP site. 3 residues coordinate substrate: Lys46, Leu78, and Arg92. ATP contacts are provided by residues Gly93–Arg95, Glu103, and Trp128–Thr134.

The protein belongs to the bacterial CoaD family. In terms of assembly, homohexamer. Mg(2+) is required as a cofactor.

The protein resides in the cytoplasm. It catalyses the reaction (R)-4'-phosphopantetheine + ATP + H(+) = 3'-dephospho-CoA + diphosphate. Its pathway is cofactor biosynthesis; coenzyme A biosynthesis; CoA from (R)-pantothenate: step 4/5. Its function is as follows. Reversibly transfers an adenylyl group from ATP to 4'-phosphopantetheine, yielding dephospho-CoA (dPCoA) and pyrophosphate. The sequence is that of Phosphopantetheine adenylyltransferase from Nitratidesulfovibrio vulgaris (strain ATCC 29579 / DSM 644 / CCUG 34227 / NCIMB 8303 / VKM B-1760 / Hildenborough) (Desulfovibrio vulgaris).